We begin with the raw amino-acid sequence, 154 residues long: Myoglobin (154 aa).

The region spanning 2–148 (GLSDGEWQLV…FRKDIAAKYK (147 aa)) is the Globin domain. Ser-4 carries the post-translational modification Phosphoserine. His-65 provides a ligand contact to nitrite. His-65 contributes to the O2 binding site. Thr-68 carries the post-translational modification Phosphothreonine. Residue His-94 coordinates heme b.

It belongs to the globin family. Monomeric.

The protein resides in the cytoplasm. The protein localises to the sarcoplasm. It catalyses the reaction Fe(III)-heme b-[protein] + nitric oxide + H2O = Fe(II)-heme b-[protein] + nitrite + 2 H(+). It carries out the reaction H2O2 + AH2 = A + 2 H2O. In terms of biological role, monomeric heme protein which primary function is to store oxygen and facilitate its diffusion within muscle tissues. Reversibly binds oxygen through a pentacoordinated heme iron and enables its timely and efficient release as needed during periods of heightened demand. Depending on the oxidative conditions of tissues and cells, and in addition to its ability to bind oxygen, it also has a nitrite reductase activity whereby it regulates the production of bioactive nitric oxide. Under stress conditions, like hypoxia and anoxia, it also protects cells against reactive oxygen species thanks to its pseudoperoxidase activity. This chain is Myoglobin (MB), found in Orcinus orca (Killer whale).